Here is a 140-residue protein sequence, read N- to C-terminus: MSQTLSDKIKIVVSSGKRKTSIARAVIKPGIGRVWINNVPVEFIQFELAKMKILEPLLLIGDLAKTVDIRVNVHGGGYMSQAEAVRIAIARGLVEFFNSDEVKSLFKEYDRHMLSGDPRQTEPKKWGRYSARRRWQKSYR.

The protein belongs to the universal ribosomal protein uS9 family.

The chain is Small ribosomal subunit protein uS9 from Desulfurococcus amylolyticus (strain DSM 18924 / JCM 16383 / VKM B-2413 / 1221n) (Desulfurococcus kamchatkensis).